The following is a 366-amino-acid chain: MASAVLSSVLTTASRFALLQVDSGSGSDSEPGKGKGRNNGKSQTLGNKSTANEKKREKRRKKKEQQQSEANELRNLAFKKIPQKSSHSVCNVQHELSLPNPVQKESREENWQEWRQRDEQLTSEMFEADLEKALLLSKLEYEEHRQDYENAENASTQTKVINKKDKRKNHQGKDKPLTVSLKDFQCEDHISKKTEESNSSQPLSHDGGFFNRLEDDVHKILVREKRREQLTEHNGTDNCPAPEHNQEVGLKDGRIERLKLELERKDAEIQKLKAVVTQWEAKYKEVKARNGQLLKMLQEGEMKDKAEILLQVDESQSIKNELTVQVSSLHAALEQERSKVKVLQAELAKYQGGRKGKRNCEPDQCR.

An interaction with IRS1 region spans residues Met1–Glu95. Residues Gln20 to Glu105 form a disordered region. A phosphoserine mark is found at Ser23, Ser25, and Ser27. Positions Asn39 to Thr50 are enriched in polar residues. Residues Gly46–Ala77 are a coiled coil. Ser106 bears the Phosphoserine; by PKG mark. 3 coiled-coil regions span residues Asp129 to Val160, Leu250 to Glu299, and Val326 to Gly353.

The protein belongs to the GKAP1 family. As to quaternary structure, interacts with PRKG1 and IRS1.

It is found in the golgi apparatus. In terms of biological role, regulates insulin-dependent IRS1 tyrosine phosphorylation in adipocytes by modulating the availability of IRS1 to IR tyrosine kinase. Its association with IRS1 is required for insulin-induced translocation of SLC2A4 to the cell membrane. Involved in TNF-induced impairment of insulin-dependent IRS1 tyrosine phosphorylation. The polypeptide is G kinase-anchoring protein 1 (Gkap1) (Rattus norvegicus (Rat)).